The following is a 237-amino-acid chain: Lysophospholipase-like protein 1 (237 aa).

Residue Ala2 is modified to N-acetylalanine. Residues Ser124, Asp179, and His211 each act as charge relay system in the active site.

This sequence belongs to the AB hydrolase superfamily. AB hydrolase 2 family.

It localises to the cytoplasm. It is found in the cytosol. It carries out the reaction S-hexadecanoyl-L-cysteinyl-[protein] + H2O = L-cysteinyl-[protein] + hexadecanoate + H(+). In terms of biological role, palmitoyl thioesterase that catalyzes depalmitoylation of CGAS and KCNMA1. Acts as a regulator of innate immunity by mediating depalmitoylation of CGAS, thereby preventing CGAS homodimerization and cyclic GMP-AMP synthase activity. Does not exhibit phospholipase nor triacylglycerol lipase activity, able to hydrolyze only short chain substrates due to its shallow active site. The sequence is that of Lysophospholipase-like protein 1 from Pongo abelii (Sumatran orangutan).